Reading from the N-terminus, the 212-residue chain is Imidazole glycerol phosphate synthase subunit HisH (212 aa).

The Glutamine amidotransferase type-1 domain maps to 3–212; it reads TVAVIDYGMG…QNFIAWDGRW (210 aa). Catalysis depends on C81, which acts as the Nucleophile. Catalysis depends on residues H190 and E192.

Heterodimer of HisH and HisF.

It localises to the cytoplasm. The catalysed reaction is 5-[(5-phospho-1-deoxy-D-ribulos-1-ylimino)methylamino]-1-(5-phospho-beta-D-ribosyl)imidazole-4-carboxamide + L-glutamine = D-erythro-1-(imidazol-4-yl)glycerol 3-phosphate + 5-amino-1-(5-phospho-beta-D-ribosyl)imidazole-4-carboxamide + L-glutamate + H(+). It carries out the reaction L-glutamine + H2O = L-glutamate + NH4(+). Its pathway is amino-acid biosynthesis; L-histidine biosynthesis; L-histidine from 5-phospho-alpha-D-ribose 1-diphosphate: step 5/9. In terms of biological role, IGPS catalyzes the conversion of PRFAR and glutamine to IGP, AICAR and glutamate. The HisH subunit catalyzes the hydrolysis of glutamine to glutamate and ammonia as part of the synthesis of IGP and AICAR. The resulting ammonia molecule is channeled to the active site of HisF. The protein is Imidazole glycerol phosphate synthase subunit HisH of Pseudomonas putida (strain ATCC 47054 / DSM 6125 / CFBP 8728 / NCIMB 11950 / KT2440).